Reading from the N-terminus, the 385-residue chain is Chaperone protein DnaJ (385 aa).

A J domain is found at 3 to 68 (DYYEILGVTR…QKRAAYDRFG (66 aa)). The segment at 135–213 (GAEVEITVPA…CHGHGQVRRE (79 aa)) adopts a CR-type zinc-finger fold. Positions 148, 151, 165, 168, 187, 190, 201, and 204 each coordinate Zn(2+). CXXCXGXG motif repeat units follow at residues 148-155 (CEVCEGSG), 165-172 (CGTCGGAG), 187-194 (CPRCGGSG), and 201-208 (CSNCHGHG).

The protein belongs to the DnaJ family. In terms of assembly, homodimer. Requires Zn(2+) as cofactor.

It is found in the cytoplasm. Participates actively in the response to hyperosmotic and heat shock by preventing the aggregation of stress-denatured proteins and by disaggregating proteins, also in an autonomous, DnaK-independent fashion. Unfolded proteins bind initially to DnaJ; upon interaction with the DnaJ-bound protein, DnaK hydrolyzes its bound ATP, resulting in the formation of a stable complex. GrpE releases ADP from DnaK; ATP binding to DnaK triggers the release of the substrate protein, thus completing the reaction cycle. Several rounds of ATP-dependent interactions between DnaJ, DnaK and GrpE are required for fully efficient folding. Also involved, together with DnaK and GrpE, in the DNA replication of plasmids through activation of initiation proteins. The protein is Chaperone protein DnaJ of Caulobacter vibrioides (strain ATCC 19089 / CIP 103742 / CB 15) (Caulobacter crescentus).